Reading from the N-terminus, the 163-residue chain is Lectin-like protein EP153R (163 aa).

Residues 1-26 (MFSNKKYIGLINKKEGLKKKIDDYSI) are Cytoplasmic-facing. A helical membrane pass occupies residues 27–47 (LIIGILIGTNILSLIINIIGE). Residues 48 to 163 (INKPICYQNN…YTDLLFICSK (116 aa)) lie on the Extracellular side of the membrane. An intrachain disulfide couples Cys-63 to Cys-74. A lectin-like region spans residues 63 to 162 (CPKDWVGYNN…HYTDLLFICS (100 aa)). Asn-84, Asn-96, Asn-97, Asn-103, Asn-109, Asn-115, Asn-129, and Asn-135 each carry an N-linked (GlcNAc...) asparagine; by host glycan. A disulfide bridge links Cys-92 with Cys-161.

It belongs to the asfivirus lectin-like protein family. In terms of assembly, homodimer.

The protein localises to the host endoplasmic reticulum membrane. Down-regulates MHC-I expression by impairing the appropriate configuration or presentation into the plasma membrane of the latter. Participates in viral hemadsorption, which may help viral spread. Reduces the transactivating activity of host TP53, thus inhibiting apoptosis. Non-essential for virus growth in swine macrophage cell cultures. This chain is Lectin-like protein EP153R, found in African swine fever virus (isolate Warthog/Namibia/Wart80/1980) (ASFV).